The chain runs to 1290 residues: MPPKKTKTSTAVAREATESPMAERSRAPDALQADPPAPTQESNNELVDSRSLEEILSGIPPPPPPAMTNEAGAPRLMITHIVNQNFKSYAGERILGPFHKRFSCIIGPNGSGKSNVIDSMLFVFGYRAQKIRSKKLSVLIHNSDEHKDVQSCTVEVHFQKIIDKEGDDFEVIPNSNFYVSRTAYKDNSSVYHISGKKATFKDVGLLLRSHGIDLDHNRFLILQGEVEQIAMMKPKGQTEHDEGMLEYLEDIIGSERLKEPIQILCRRVELLNEQRGEKLNRVKMVEKEKDALEGEKNKAIEFLTVENETFKKKNQLCQYYIHDLQKRSRDKEAQKEKIQEDTKDISEKSNTLLETMKEKNKALKDVEKQLNKITKFIEENREKFTQLDLQDVDTREKLKHSKSKVKKLQKQLQKDKEKVDELKNVPANSQKIIAEETNKKDLLEKQKEKEEEKLKNVMDSLKKETQGLQEEKEVKEKELMEISKTVNEARSKMDVAQSELDIYLSRHNSALSQLNKAKEALNTASATLKERRAAIKELETKLPKDEGDLKKREKELESLVSEEGNIKNQVRELRQKVEEARSSLSANRSRGKVLDALIQQKKSGKIPGIFGRLGDLGAIDEKYDVAISSSCGALDHIVVDTIDTAQECVNFLKKQNVGVATFIGLDKMKVWEKGLNKIQTPENIPRLFDMVKVKDEQIKPAFYFALRDTIVANNLDQATRVAFQKDKRWRVVTLQGQIIEQSGTMTGGGGKVMKGRMGSSVMVEISDDQLQKMENKLKTDTTRATEIQDRKAHLEEEVAKLRQATREMKNTFEKYTASLQSLSEQEVHLKAQVKELEVNVAAAAPDKNQQKQMEKNLETLKKEYEKVAEKAGKVEAEVKRLHKLIVDINNHKLKAQQDKLDKVTKEIDECASAITKAQVSIKTADRNLKKSEEAVARTEKEIVANDKSIEELTEDLKKLEEKATTVMNECKEAECSLPEVQEQHRSLLQEIKAIQEKEHALQKEALNIRLNIEQIDSHIAEHQSKIKYWQKEITKISLHKIEDIPEEVLPGLAQEELEAIKDPDQIINQIALLEAKSHEMKPNLGAIAEYKKKEELYLQRVAELDEITNERDSFRRAYEDLRKQRLNEFMAGFNIITNKLKENYQMLTLGGDAELELVDSLDPFSEGIMFSVRPPKKSWKKIFNLSGGEKTLSSLALVFALHHYKPTPLYFMDEIDAALDFKNVSIVAFYIYEQTKNAQFIIISLRNNMFEIADRLIGIYKTHNTTKSVATNPKIIAAKGLAEMQSVGCA.

A disordered region spans residues 1–48; the sequence is MPPKKTKTSTAVAREATESPMAERSRAPDALQADPPAPTQESNNELVD. The span at 15-27 shows a compositional bias: basic and acidic residues; the sequence is EATESPMAERSRA. Position 107–114 (107–114) interacts with ATP; sequence GPNGSGKS. Residues 264-594 adopt a coiled-coil conformation; the sequence is LCRRVELLNE…SANRSRGKVL (331 aa). Positions 607 to 721 constitute an SMC hinge domain; the sequence is PGIFGRLGDL…ANNLDQATRV (115 aa). Coiled-coil stretches lie at residues 764-1027 and 1094-1129; these read EISD…SKIK and EELYLQRVAELDEITNERDSFRRAYEDLRKQRLNEF.

It belongs to the SMC family. SMC4 subfamily. In terms of assembly, forms a heterodimer with XCAP-E/SMC2. Component of the condensin complex, which contains the XCAP-E/SMC2 and XCAP-C/SMC4 heterodimer, and three non SMC subunits that probably regulate the complex: XCAP-H/BRRN1, XCAP-D2/CNAP1 and XCAP-G/CAPG.

The protein localises to the nucleus. It is found in the cytoplasm. The protein resides in the chromosome. Its function is as follows. Central component of the condensin complex, a complex required for conversion of interphase chromatin into mitotic-like condense chromosomes. The condensin complex probably introduces positive supercoils into relaxed DNA in the presence of type I topoisomerases and converts nicked DNA into positive knotted forms in the presence of type II topoisomerase. The chain is Structural maintenance of chromosomes protein 4 (smc4) from Xenopus laevis (African clawed frog).